The following is a 318-amino-acid chain: MFMINLFSLIIPILLAVAFLTLVERKTLGYMQLRKGPNVVGPYGLLQPFADAIKLFTKEPLRPLTSSKFMFTIAPALALTLALTMWVPLPMPYPLINMNLSMLFILAMSSLAVYSILWSGWASNSKYALIGALRAVAQTISYEVSLAIILLPTMLMNGSFTLSTLTTTQEHLWLIFPLWPLAMMWFVSTLAETNRAPFDLTEGESELVSGFNVEYAAGPFALFFMTEYANIIMMNALTAILFLGTFHNPLLPEAHTINLILKTSLLTICFLWVRASYPRFRYDQLMHLLWKNFLPLTLALCMWHMSIPIMLACIPPQT.

8 consecutive transmembrane segments (helical) span residues 2–22 (FMIN…FLTL), 69–89 (FMFT…WVPL), 102–122 (MLFI…SGWA), 146–166 (LAII…STLT), 171–191 (HLWL…STLA), 231–251 (IIMM…NPLL), 253–273 (EAHT…FLWV), and 294–314 (LPLT…LACI).

Belongs to the complex I subunit 1 family. As to quaternary structure, core subunit of respiratory chain NADH dehydrogenase (Complex I) which is composed of 45 different subunits.

Its subcellular location is the mitochondrion inner membrane. The catalysed reaction is a ubiquinone + NADH + 5 H(+)(in) = a ubiquinol + NAD(+) + 4 H(+)(out). Functionally, core subunit of the mitochondrial membrane respiratory chain NADH dehydrogenase (Complex I) which catalyzes electron transfer from NADH through the respiratory chain, using ubiquinone as an electron acceptor. Essential for the catalytic activity and assembly of complex I. The polypeptide is NADH-ubiquinone oxidoreductase chain 1 (MT-ND1) (Dugong dugon (Dugong)).